The primary structure comprises 82 residues: Large ribosomal subunit protein uL23 (82 aa).

The protein belongs to the universal ribosomal protein uL23 family. In terms of assembly, part of the 50S ribosomal subunit. Contacts protein L29.

Binds to 23S rRNA. One of the proteins that surrounds the polypeptide exit tunnel on the outside of the ribosome. This Natronomonas pharaonis (strain ATCC 35678 / DSM 2160 / CIP 103997 / JCM 8858 / NBRC 14720 / NCIMB 2260 / Gabara) (Halobacterium pharaonis) protein is Large ribosomal subunit protein uL23.